The chain runs to 426 residues: Serine--tRNA ligase (426 aa).

An L-serine-binding site is contributed by 231–233 (TAE). 262 to 264 (RSE) provides a ligand contact to ATP. Residue glutamate 285 participates in L-serine binding. 349-352 (EISS) contributes to the ATP binding site. Residue serine 384 coordinates L-serine.

The protein belongs to the class-II aminoacyl-tRNA synthetase family. Type-1 seryl-tRNA synthetase subfamily. Homodimer. The tRNA molecule binds across the dimer.

The protein resides in the cytoplasm. The catalysed reaction is tRNA(Ser) + L-serine + ATP = L-seryl-tRNA(Ser) + AMP + diphosphate + H(+). The enzyme catalyses tRNA(Sec) + L-serine + ATP = L-seryl-tRNA(Sec) + AMP + diphosphate + H(+). It participates in aminoacyl-tRNA biosynthesis; selenocysteinyl-tRNA(Sec) biosynthesis; L-seryl-tRNA(Sec) from L-serine and tRNA(Sec): step 1/1. In terms of biological role, catalyzes the attachment of serine to tRNA(Ser). Is also able to aminoacylate tRNA(Sec) with serine, to form the misacylated tRNA L-seryl-tRNA(Sec), which will be further converted into selenocysteinyl-tRNA(Sec). The sequence is that of Serine--tRNA ligase from Laribacter hongkongensis (strain HLHK9).